Consider the following 196-residue polypeptide: Somatotropin (196 aa).

Residues 1 to 16 (MDKVILVLLMSLGASS) form the signal peptide. Q17 is subject to Pyrrolidone carboxylic acid. Zn(2+) is bound at residue H35. C67 and C169 are disulfide-bonded. E178 provides a ligand contact to Zn(2+). A disulfide bridge connects residues C186 and C194.

This sequence belongs to the somatotropin/prolactin family.

It is found in the secreted. Its function is as follows. Growth hormone plays an important role in growth control and is involved in the regulation of several anabolic processes. Implicated as an osmoregulatory substance important for seawater adaptation. This Takifugu rubripes (Japanese pufferfish) protein is Somatotropin (gh).